The chain runs to 176 residues: Inner membrane assembly complex subunit 17 (176 aa).

The N-terminal 28 residues, 1-28 (MLRVLPTSFKSISTRSAFRACQLSPLTV), are a transit peptide targeting the mitochondrion. At 29-98 (YCPLKSSQGT…MSQEVSLKRF (70 aa)) the chain is on the mitochondrial matrix side. Residues 99 to 121 (VRPLWVFFLMSSTVYLILHYVWW) traverse the membrane as a helical segment. At 122-176 (KLEVVEKEKELQSHVESLEMELDQTLKSQNQNVSSSQNNGNNKTNDKPWYRKWFF) the chain is on the mitochondrial intermembrane side. Residues 123–151 (LEVVEKEKELQSHVESLEMELDQTLKSQN) are a coiled coil. A compositionally biased stretch (low complexity) spans 149–163 (SQNQNVSSSQNNGNN). The tract at residues 149-168 (SQNQNVSSSQNNGNNKTNDK) is disordered.

The protein belongs to the INA17 family. Component of the inner membrane assembly (INA) complex, composed of INA17 and INA22. Interacts with a subset of F(1)F(0)-ATP synthase subunits of the F(1)-domain and the peripheral stalk.

It localises to the mitochondrion inner membrane. Functionally, component of the INA complex (INAC) that promotes the biogenesis of mitochondrial F(1)F(0)-ATP synthase. INAC facilitates the assembly of the peripheral stalk and promotes the assembly of the catalytic F(1)-domain with the membrane-embedded F(0)-domain. In Zygosaccharomyces rouxii (strain ATCC 2623 / CBS 732 / NBRC 1130 / NCYC 568 / NRRL Y-229), this protein is Inner membrane assembly complex subunit 17.